The following is a 1911-amino-acid chain: MTSQEKTEEYPFADIFDEDETERNFLLSKPVCFVVFGKPGVGKTTLARYITQAWKCIRVEALPILEEQIAAETESGVMLQSMLISGQSIPDELVIKLMLEKLNSPEVCHFGYIITEIPSLSQDAMTTLQQIELIKNLNLKPDVIINIKCPDYDLCQRISGQRQHNNTGYIYSRDQWDPEVIENHRKKKKEAQKDGKGEEEEEEEEQEEEEAFIAEMQMVAEILHHLVQRPEDYLENVENIVKLYKETILQTLEEVMAEHNPQYLIELNGNKPAEELFMIVMDRLKYLNLKRAAILTKLQGAEEEINDTMENDELFRTLASYKLIAPRYRWQRSKWGRTCPVNLKDGNIYSGLPDYSVSFLGKIYCLSSEEALKPFLLNPRPYLLPPMPGPPCKVFILGPQYSGKTTLCNMLAENYKGKVVDYAQLVQPRFDKARETLVENTIAEATAAAIKVVKEKLLRELQARKQAETALREFQRQYEKMEFGVFPMEATHSSIDEEGYIQGSQRDRGSSLVDTEEAKTKSENVLHDQAAKVDKDDGKETGETFTFKRHSQDASQDVKLYSDTAPTEDLIEEVTADHPEVVTMIEETIKMSQDINFEQPYEKHAEILQEVLGEVMEENKDRFPGAPKYGGWIVDNCPIVKELWMALIKKGIIPDLVIYLSDTENNGKCLFNRIYLQKKSEIDSKILERLLEELQKKKKEEEEARKATEEELRLEEENRRLLELMKVKAKEAEETDNEDEEEIEGDELEVHEEPEASHDTRGSWLPEEFEASEVPETEPEAVSEPIEETTVETEIPKGSKEGLEIEKLSETVVLPEFPEDSYPDVPEMEPFKEKIGSFIILWKQLEATISEAYIKILNLEIADRTPQELLQKVVETMEKPFQYTAWELTGEDYEEETEDYQTEAEVDEELEEEEEEEGEDKMKERKRHLGDTKHFCPVVLKENFILQPGNTEEAAKYREKIYYFSSAEAKEKFLEHPEDYVAHEEPLKAPPLRICLVGPQGSGKTMCGRQLAEKLNIFHIQFEEVLQEKLLLKTEKKVGPEFEEDSENEQAAKQELEELAIQANVKVEEENTKKQLPEVQLTEEEEVIKSSLMENEPLPPEILEVILSEWWLKEPIRSTGFILDGFPRYPEEAQFLGDRGFFPDAAVFIQVDDQDIFDRLLPAQIEKWKLKQKKKLERKKLIKDMKAKIRVDTIAKRRAELILERDKKRRENVVRDDEEISEEELEEDNDDIENILEDEFPKDEEEMSGEEDEEQETDAIERLRGELGEKFEADTHNLQIIQDELERYLIPIISINGARRNHIVQYTLNMKLKPLVENRASIFEKCHPIPAPLAQKMLTFTYKYISSFGYWDPVKLSEGETIKPVENAENPIYPVIHRQYIYFLSSKETKEKFMKNPIKYIRQPKPKPTVPIRIIIVGPPKSGKTTVAKKITSEYGLKHLSIGGALRYVLNNHPETELALMLNWHLHKGMTAPDELAIQALELSLMESVCNTAGVVIDGYPVTKHQMNLLEARSIIPMVIFELSVPSKEIFKRLLLEKENEQRLPYPLHNSAQIVAVNNVKYRKNIGEIRQYYQEQHQNWYVIDGFHSKWWVWNEVIKNVQMVNKYMQTYLERIKAGKAACIDKLCITPQELLSRLGEFEQFCPVSLAESQELFDCSATDSLEFAAEFRGHYYKMSSQEKLNKFLENPELYVPPLAPHPLPSADMIPKRLTLSELKSRFPKCAELQGYCPVTYKDGNQRYEALVPGSINYALEYHNRIYICENKEKLQKFLRSPLKYWEQKLPHKLPPLREPILLTSLPLPGYLEQGIATSLIKAMNAAGCLKPKFPFLSIRRSALLYIALHLKAFNPKGSEYTRKKYKKKMEQFMESCELITYLGAKMTRKYKEPQFRAIDFDHKLKTFLSLRNIDPING.

Residues 31–285 (VCFVVFGKPG…LFMIVMDRLK (255 aa)) are adenylate kinase 1. 40–45 (GVGKTT) contacts ATP. The segment at 60-89 (EALPILEEQIAAETESGVMLQSMLISGQSI) is NMP 1. Residues 87–89 (QSI) and 116–119 (EIPS) contribute to the AMP site. Residues 160–205 (GQRQHNNTGYIYSRDQWDPEVIENHRKKKKEAQKDGKGEEEEEEEE) form an LID 1 region. The disordered stretch occupies residues 185–210 (RKKKKEAQKDGKGEEEEEEEEQEEEE). Acidic residues predominate over residues 197-210 (GEEEEEEEEQEEEE). AMP is bound at residue R229. 2 coiled-coil regions span residues 443-485 (AEAT…EFGV) and 676-711 (LQKK…TEEE). Disordered regions lie at residues 728–796 (KAKE…TEIP) and 892–926 (DYEE…KERK). Residues 733-750 (EETDNEDEEEIEGDELEV) show a composition bias toward acidic residues. The span at 751–761 (HEEPEASHDTR) shows a compositional bias: basic and acidic residues. Acidic residues-rich tracts occupy residues 767–791 (EEFE…ETTV) and 892–919 (DYEE…EEGE). Adenylate kinase regions lie at residues 992–1203 (LRIC…ELIL) and 1412–1601 (IRII…KNVQ). Residue 1001–1006 (GSGKTM) coordinates ATP. The interval 1021 to 1052 (QFEEVLQEKLLLKTEKKVGPEFEEDSENEQAA) is NMP 2. AMP contacts are provided by residues 1050–1052 (QAA) and 1079–1082 (VQLT). The tract at residues 1124–1144 (DGFPRYPEEAQFLGDRGFFPD) is LID 2. 1421–1426 (KSGKTT) contacts ATP. Residues 1441 to 1472 (SIGGALRYVLNNHPETELALMLNWHLHKGMTA) form an NMP 3 region. AMP is bound by residues R1447, 1470-1472 (MTA), 1499-1502 (GYPV), Q1506, and R1543. The LID 3 stretch occupies residues 1536 to 1550 (LEKENEQRLPYPLHN).

It belongs to the adenylate kinase family.

Its subcellular location is the cytoplasm. The protein resides in the nucleus. It localises to the cell projection. The protein localises to the cilium. It is found in the flagellum. The enzyme catalyses a ribonucleoside 5'-phosphate + ATP = a ribonucleoside 5'-diphosphate + ADP. The catalysed reaction is AMP + ATP = 2 ADP. It carries out the reaction GTP + AMP = GDP + ADP. It catalyses the reaction CMP + ATP = CDP + ADP. The enzyme catalyses GTP + CMP = CDP + GDP. The catalysed reaction is dAMP + ATP = dADP + ADP. It carries out the reaction dCMP + ATP = dCDP + ADP. It catalyses the reaction a ribonucleoside 5'-diphosphate + ATP = a ribonucleoside 5'-triphosphate + ADP. The enzyme catalyses CDP + ATP = CTP + ADP. The catalysed reaction is CDP + GTP = CTP + GDP. It carries out the reaction GDP + ATP = GTP + ADP. It catalyses the reaction UDP + ATP = UTP + ADP. The enzyme catalyses GTP + UDP = UTP + GDP. The catalysed reaction is dTDP + GTP = dTTP + GDP. It carries out the reaction dCDP + ATP = dCTP + ADP. It catalyses the reaction dCDP + GTP = dCTP + GDP. The enzyme catalyses dGDP + ATP = dGTP + ADP. The catalysed reaction is dTDP + ATP = dTTP + ADP. It carries out the reaction dADP + GTP = dATP + GDP. Broad-specificity nucleoside phosphate kinase involved in cellular nucleotide homeostasis by catalyzing nucleoside-phosphate interconversions. Similar to other adenylate kinases, preferentially catalyzes the phosphorylation of the nucleoside monophosphate AMP with ATP as phosphate donor to produce ADP. In vitro, can also catalyze the phosphorylation of CMP, dAMP and dCMP and use GTP as an alternate phosphate donor. Moreover, exhibits a diphosphate kinase activity, producing ATP, CTP, GTP, UTP, TTP, dATP, dCTP and dGTP from the corresponding diphosphate substrates with either ATP or GTP as phosphate donors. For this activity shows the following substrate preference CDP &gt; UDP &gt; ADP &gt; TDP. In Homo sapiens (Human), this protein is Adenylate kinase 9.